Reading from the N-terminus, the 224-residue chain is Cerebellin-2 (224 aa).

Residues 1-51 form the signal peptide; that stretch reads MPAPGQGPRGPLLSMPGRRGALREPADFGSSLGAVLALLLLLLPACCPVRA. N-linked (GlcNAc...) asparagine glycosylation is found at Asn53 and Asn110. One can recognise a C1q domain in the interval 88–224; it reads SGSAKVAFSA…TFSGFLVFPL (137 aa).

Homohexamer; disulfide-linked homotrimers. The trimers are assembled via the globular C1q domains. The trimers associate via N-terminal cysteine residues to form disulfide-linked hexamers. May form homooligomers or heterooligomers with CBLN1 and CBLN3 prior to secretion. Once secreted, does not interact with other CBLN family members. Interacts with GRID2, and more weakly with GRID1. Interacts with NRXN1 and NRXN2 long and short isoforms produced by alternative promoter usage. Weakly interacts with NRXN3 short isoform and not at all with NRXN3 long isoform. As to expression, expressed in various brain regions with higher levels in the olfactory bulb, cerebral cortex, certain thalamic and hypothalamic nuclei, superior and inferior colliculi and some brainstem nuclei. Highly expressed in the dorsal medial habenula.

The protein resides in the secreted. Its function is as follows. Acts as a synaptic organizer in specific subsets of neurons in the brain. Essential for long-term maintenance but not establishment of excitatory synapses. Functions as part of a trans-synaptic complex by binding to postsynaptic GRID1 and presynaptic neurexins. This interaction helps regulate the activity of NMDA and AMPA receptors at hippocampal synapses without affecting synapse formation. NRXN1B-CBLN2-GRID1 complex transduce presynaptic signals into postsynaptic NMDAR response. NRXN3B-CBLN2-GRID1 complex transduce presynaptic signals into postsynaptic AMPAR response. The protein is Cerebellin-2 (Cbln2) of Mus musculus (Mouse).